Reading from the N-terminus, the 496-residue chain is Aspartyl/glutamyl-tRNA(Asn/Gln) amidotransferase subunit B (496 aa).

The protein belongs to the GatB/GatE family. GatB subfamily. In terms of assembly, heterotrimer of A, B and C subunits.

It catalyses the reaction L-glutamyl-tRNA(Gln) + L-glutamine + ATP + H2O = L-glutaminyl-tRNA(Gln) + L-glutamate + ADP + phosphate + H(+). It carries out the reaction L-aspartyl-tRNA(Asn) + L-glutamine + ATP + H2O = L-asparaginyl-tRNA(Asn) + L-glutamate + ADP + phosphate + 2 H(+). Its function is as follows. Allows the formation of correctly charged Asn-tRNA(Asn) or Gln-tRNA(Gln) through the transamidation of misacylated Asp-tRNA(Asn) or Glu-tRNA(Gln) in organisms which lack either or both of asparaginyl-tRNA or glutaminyl-tRNA synthetases. The reaction takes place in the presence of glutamine and ATP through an activated phospho-Asp-tRNA(Asn) or phospho-Glu-tRNA(Gln). This chain is Aspartyl/glutamyl-tRNA(Asn/Gln) amidotransferase subunit B, found in Prochlorococcus marinus (strain MIT 9303).